The sequence spans 576 residues: RING finger and SPRY domain-containing protein 1 (576 aa).

Residues 1–16 (MIVLGWAVFLASRSLG) form the signal peptide. Phosphoserine is present on Ser50. The disordered stretch occupies residues 50 to 99 (SGTDDSVDTQQQQAENSAVPTADTRSQPRDPVRPPRRGRGPHEPRRKKQN). A compositionally biased stretch (polar residues) spans 57-68 (DTQQQQAENSAV). Positions 83-97 (PPRRGRGPHEPRRKK) are enriched in basic residues. Residues 300–483 (LFLKEGRQLT…CEFNFGAKPF (184 aa)) form the B30.2/SPRY domain. Asn314 carries N-linked (GlcNAc...) asparagine glycosylation. The RING-type zinc-finger motif lies at 527-562 (CSLCCDEVADTQLKPCGHSDLCMDCALQLETCPLCR).

It localises to the secreted. The sequence is that of RING finger and SPRY domain-containing protein 1 (RSPRY1) from Macaca fascicularis (Crab-eating macaque).